A 367-amino-acid polypeptide reads, in one-letter code: 4-hydroxy-3-methylbut-2-en-1-yl diphosphate synthase (flavodoxin) (367 aa).

Cysteine 265, cysteine 268, cysteine 300, and glutamate 307 together coordinate [4Fe-4S] cluster.

Belongs to the IspG family. [4Fe-4S] cluster serves as cofactor.

It carries out the reaction (2E)-4-hydroxy-3-methylbut-2-enyl diphosphate + oxidized [flavodoxin] + H2O + 2 H(+) = 2-C-methyl-D-erythritol 2,4-cyclic diphosphate + reduced [flavodoxin]. It functions in the pathway isoprenoid biosynthesis; isopentenyl diphosphate biosynthesis via DXP pathway; isopentenyl diphosphate from 1-deoxy-D-xylulose 5-phosphate: step 5/6. In terms of biological role, converts 2C-methyl-D-erythritol 2,4-cyclodiphosphate (ME-2,4cPP) into 1-hydroxy-2-methyl-2-(E)-butenyl 4-diphosphate. The polypeptide is 4-hydroxy-3-methylbut-2-en-1-yl diphosphate synthase (flavodoxin) (Bacillus anthracis).